Consider the following 375-residue polypeptide: Alcohol dehydrogenase 1A (375 aa).

S2 carries the post-translational modification N-acetylserine. A Phosphoserine modification is found at S23. C47 lines the Zn(2+) pocket. An NAD(+)-binding site is contributed by 48-52 (GTDDH). Positions 68, 98, 101, 104, 112, and 175 each coordinate Zn(2+). NAD(+)-binding positions include 200–205 (GLGGVG), D224, K229, I270, 293–295 (VGV), 318–320 (AIL), and R370.

The protein belongs to the zinc-containing alcohol dehydrogenase family. Dimer of identical or heterodimer of closely related subunits alpha, beta, or gamma that are encoded by genes ADH1A, ADH1B, and ADH1C, respectively. Zn(2+) is required as a cofactor.

The protein localises to the cytoplasm. The catalysed reaction is a primary alcohol + NAD(+) = an aldehyde + NADH + H(+). It carries out the reaction a secondary alcohol + NAD(+) = a ketone + NADH + H(+). It catalyses the reaction butan-1-ol + NAD(+) = butanal + NADH + H(+). The enzyme catalyses 1-propanol + NAD(+) = propanal + NADH + H(+). Alcohol dehydrogenase. Oxidizes primary as well as secondary alcohols. Ethanol is a very poor substrate. The polypeptide is Alcohol dehydrogenase 1A (ADH1A) (Homo sapiens (Human)).